A 69-amino-acid polypeptide reads, in one-letter code: uncharacterized protein (69 aa).

This is an uncharacterized protein from Mycobacterium tuberculosis (strain ATCC 25618 / H37Rv).